Consider the following 71-residue polypeptide: ATP synthase F(0) complex subunit e, mitochondrial (71 aa).

The residue at position 34 (lysine 34) is an N6-acetyllysine. Serine 68 is subject to Phosphoserine.

Belongs to the ATPase e subunit family. As to quaternary structure, component of the ATP synthase complex composed at least of ATP5F1A/subunit alpha, ATP5F1B/subunit beta, ATP5MC1/subunit c (homooctomer), MT-ATP6/subunit a, MT-ATP8/subunit 8, ATP5ME/subunit e, ATP5MF/subunit f, ATP5MG/subunit g, ATP5MK/subunit k, ATP5MJ/subunit j, ATP5F1C/subunit gamma, ATP5F1D/subunit delta, ATP5F1E/subunit epsilon, ATP5PF/subunit F6, ATP5PB/subunit b, ATP5PD/subunit d, ATP5PO/subunit OSCP. ATP synthase complex consists of a soluble F(1) head domain (subunits alpha(3) and beta(3)) - the catalytic core - and a membrane F(0) domain - the membrane proton channel (subunits c, a, 8, e, f, g, k and j). These two domains are linked by a central stalk (subunits gamma, delta, and epsilon) rotating inside the F1 region and a stationary peripheral stalk (subunits F6, b, d, and OSCP).

The protein resides in the mitochondrion. It localises to the mitochondrion inner membrane. Subunit e, of the mitochondrial membrane ATP synthase complex (F(1)F(0) ATP synthase or Complex V) that produces ATP from ADP in the presence of a proton gradient across the membrane which is generated by electron transport complexes of the respiratory chain. ATP synthase complex consist of a soluble F(1) head domain - the catalytic core - and a membrane F(1) domain - the membrane proton channel. These two domains are linked by a central stalk rotating inside the F(1) region and a stationary peripheral stalk. During catalysis, ATP synthesis in the catalytic domain of F(1) is coupled via a rotary mechanism of the central stalk subunits to proton translocation. In vivo, can only synthesize ATP although its ATP hydrolase activity can be activated artificially in vitro. Part of the complex F(0) domain. This chain is ATP synthase F(0) complex subunit e, mitochondrial, found in Rattus norvegicus (Rat).